We begin with the raw amino-acid sequence, 88 residues long: Small ribosomal subunit protein uS17 (88 aa).

It belongs to the universal ribosomal protein uS17 family. In terms of assembly, part of the 30S ribosomal subunit.

Functionally, one of the primary rRNA binding proteins, it binds specifically to the 5'-end of 16S ribosomal RNA. The chain is Small ribosomal subunit protein uS17 from Pseudomonas fluorescens (strain SBW25).